Reading from the N-terminus, the 496-residue chain is tRNA-2-methylthio-N(6)-dimethylallyladenosine synthase (496 aa).

The MTTase N-terminal domain maps to 43–160 (KKVFVTTQGC…LPELYDQSHQ (118 aa)). [4Fe-4S] cluster-binding residues include C52, C89, C123, C204, C208, and C211. Residues 190–422 (RVEGFKAFVS…QKVIIDSTLA (233 aa)) form the Radical SAM core domain. Residues 425 to 493 (HEMVGTTTRV…PHMVKGEIEA (69 aa)) enclose the TRAM domain.

Belongs to the methylthiotransferase family. MiaB subfamily. In terms of assembly, monomer. [4Fe-4S] cluster is required as a cofactor.

It localises to the cytoplasm. The enzyme catalyses N(6)-dimethylallyladenosine(37) in tRNA + (sulfur carrier)-SH + AH2 + 2 S-adenosyl-L-methionine = 2-methylsulfanyl-N(6)-dimethylallyladenosine(37) in tRNA + (sulfur carrier)-H + 5'-deoxyadenosine + L-methionine + A + S-adenosyl-L-homocysteine + 2 H(+). Functionally, catalyzes the methylthiolation of N6-(dimethylallyl)adenosine (i(6)A), leading to the formation of 2-methylthio-N6-(dimethylallyl)adenosine (ms(2)i(6)A) at position 37 in tRNAs that read codons beginning with uridine. This chain is tRNA-2-methylthio-N(6)-dimethylallyladenosine synthase, found in Psychrobacter arcticus (strain DSM 17307 / VKM B-2377 / 273-4).